The sequence spans 435 residues: Histidine--tRNA ligase (435 aa).

This sequence belongs to the class-II aminoacyl-tRNA synthetase family. In terms of assembly, homodimer.

The protein localises to the cytoplasm. It carries out the reaction tRNA(His) + L-histidine + ATP = L-histidyl-tRNA(His) + AMP + diphosphate + H(+). This is Histidine--tRNA ligase from Synechococcus elongatus (strain ATCC 33912 / PCC 7942 / FACHB-805) (Anacystis nidulans R2).